The primary structure comprises 241 residues: NEP1-interacting protein 2 (241 aa).

Residues 1 to 20 (MASSSSSSYRFQSGSYPLSS) form a disordered region. The Lumenal, thylakoid portion of the chain corresponds to 1 to 36 (MASSSSSSYRFQSGSYPLSSSPSLGNFVERIKDACH). Residues 37–57 (FLVSAVLGTIISAILTFFFAL) form a helical membrane-spanning segment. Over 58 to 76 (VGTLLGALTGALIGQETES) the chain is Stromal. Residues 77 to 97 (GFIRGAAIGAISGAVFSIEVF) form a helical membrane-spanning segment. The Lumenal, thylakoid portion of the chain corresponds to 98–109 (ESSLDLWKSDES). Residues 110–130 (GFGCFLYLIDVIVSLLSGRLV) traverse the membrane as a helical segment. The Stromal segment spans residues 131–241 (RERIGPAMLS…GSCPMCRRDI (111 aa)). An RING-type; atypical zinc finger spans residues 196–238 (CSVCLQDFQLGETVRSLPHCHHMFHLPCIDNWLLRHGSCPMCR).

Belongs to the RING-type zinc finger family. NIP subfamily. As to quaternary structure, interacts with RPOT2.

It is found in the plastid. The protein localises to the chloroplast thylakoid membrane. Functionally, intrinsic thylakoid membrane protein that fixes RPOT2 on the stromal side of the thylakoid membrane. The chain is NEP1-interacting protein 2 (NIP2) from Arabidopsis thaliana (Mouse-ear cress).